The chain runs to 508 residues: Photosystem II CP47 reaction center protein (508 aa).

6 consecutive transmembrane segments (helical) span residues Ser21–Ser36, Ile101–Trp115, Gly140–Phe156, Ile203–Ser218, Val237–Val252, and Ser457–Arg472.

It belongs to the PsbB/PsbC family. PsbB subfamily. PSII is composed of 1 copy each of membrane proteins PsbA, PsbB, PsbC, PsbD, PsbE, PsbF, PsbH, PsbI, PsbJ, PsbK, PsbL, PsbM, PsbT, PsbX, PsbY, PsbZ, Psb30/Ycf12, at least 3 peripheral proteins of the oxygen-evolving complex and a large number of cofactors. It forms dimeric complexes. Binds multiple chlorophylls. PSII binds additional chlorophylls, carotenoids and specific lipids. is required as a cofactor.

The protein localises to the plastid. It localises to the chloroplast thylakoid membrane. Its function is as follows. One of the components of the core complex of photosystem II (PSII). It binds chlorophyll and helps catalyze the primary light-induced photochemical processes of PSII. PSII is a light-driven water:plastoquinone oxidoreductase, using light energy to abstract electrons from H(2)O, generating O(2) and a proton gradient subsequently used for ATP formation. The sequence is that of Photosystem II CP47 reaction center protein from Ceratophyllum demersum (Rigid hornwort).